Here is a 213-residue protein sequence, read N- to C-terminus: MYQDKILVRHLGLQPYEPVSQAMHDFTDSRDDHTPDEIWLVEHHPVFTQGQAGKAEHVLVPGDIPVIQSDRGGQVTYHGPGQQVMYVLLNLKRRKLGVRELVTLLEQTVVDTLAEYDIDAHPRADAPGVYVGEMKICSLGLRIRKGCSFHGLALNINMDLSPFLRINPCGYAGMEMTQMRQWVENATPGIIGPLLVSKLLALLNNPPHEYIPA.

Residues Asp32–Pro207 enclose the BPL/LPL catalytic domain. Substrate contacts are provided by residues Arg71–His78, Ser138–Gly140, and Gly151–Ala153. The Acyl-thioester intermediate role is filled by Cys169.

The protein belongs to the LipB family.

It is found in the cytoplasm. The enzyme catalyses octanoyl-[ACP] + L-lysyl-[protein] = N(6)-octanoyl-L-lysyl-[protein] + holo-[ACP] + H(+). It functions in the pathway protein modification; protein lipoylation via endogenous pathway; protein N(6)-(lipoyl)lysine from octanoyl-[acyl-carrier-protein]: step 1/2. Its function is as follows. Catalyzes the transfer of endogenously produced octanoic acid from octanoyl-acyl-carrier-protein onto the lipoyl domains of lipoate-dependent enzymes. Lipoyl-ACP can also act as a substrate although octanoyl-ACP is likely to be the physiological substrate. The polypeptide is Octanoyltransferase (Enterobacter sp. (strain 638)).